The sequence spans 304 residues: Type II methyltransferase M.ScaI (304 aa).

This sequence belongs to the N(4)/N(6)-methyltransferase family. N(4) subfamily.

The enzyme catalyses a 2'-deoxycytidine in DNA + S-adenosyl-L-methionine = an N(4)-methyl-2'-deoxycytidine in DNA + S-adenosyl-L-homocysteine + H(+). A methylase that recognizes the double-stranded sequence 5'-AGTACT-3', methylates C-5 on both strands, and protects the DNA from cleavage by the ScaI endonuclease. In Streptomyces caespitosus, this protein is Type II methyltransferase M.ScaI.